The following is a 215-amino-acid chain: Ectodysplasin-A receptor-associated adapter protein (215 aa).

2 disordered regions span residues 1–41 and 62–86; these read MGLR…FNMS and LNCP…TGDP. Over residues 17 to 28 the composition is skewed to basic and acidic residues; sequence GHQEDHMVKEPV. A Death domain is found at 123 to 202; the sequence is DVIRIKLDPC…KVLRRWVDEE (80 aa).

As to quaternary structure, self-associates and binds EDAR, TRAF1, TRAF2 and TRAF3. As to expression, detected in adult pancreas, placenta and fetal skin, and at lower levels in lung, thymus, prostate and testis.

Its subcellular location is the cytoplasm. Functionally, adapter protein that interacts with EDAR DEATH domain and couples the receptor to EDA signaling pathway during morphogenesis of ectodermal organs. Mediates the activation of NF-kappa-B. This chain is Ectodysplasin-A receptor-associated adapter protein (EDARADD), found in Homo sapiens (Human).